Reading from the N-terminus, the 497-residue chain is uncharacterized protein (497 aa).

ATP is bound at residue 266–273; the sequence is GIQGTGKS.

This sequence belongs to the AAA ATPase family. Highly divergent.

The protein localises to the plastid. Its subcellular location is the chloroplast. This is an uncharacterized protein from Trieres chinensis (Marine centric diatom).